The following is a 263-amino-acid chain: Post-GPI attachment to proteins factor 2 (263 aa).

6 consecutive transmembrane segments (helical) span residues 16-36, 69-89, 109-129, 143-163, 180-200, and 208-228; these read FVIC…ILSL, YIWR…AIAF, FLCN…LALT, CFGG…WLFN, YKIL…YLYW, and PGIY…NIFF.

The protein belongs to the PGAP2 family.

It is found in the golgi apparatus membrane. The protein localises to the endoplasmic reticulum membrane. In terms of biological role, involved in the lipid remodeling steps of GPI-anchor maturation. Required for stable expression of GPI-anchored proteins at the cell surface. In Caenorhabditis elegans, this protein is Post-GPI attachment to proteins factor 2.